The chain runs to 339 residues: uncharacterized protein (339 aa).

The 231-residue stretch at 13–243 folds into the ABC transporter domain; that stretch reads LSLNKLDVGF…PATPFICEFI (231 aa). 45–52 serves as a coordination point for ATP; that stretch reads GPSGSGKS.

It belongs to the ABC transporter superfamily.

It is found in the cell inner membrane. In terms of biological role, probably part of a binding-protein-dependent transport system y4fNOP. Probably responsible for energy coupling to the transport system. This is an uncharacterized protein from Sinorhizobium fredii (strain NBRC 101917 / NGR234).